Reading from the N-terminus, the 209-residue chain is Probable GTP-binding protein EngB (209 aa).

Positions 27–201 constitute an EngB-type G domain; that stretch reads SGVEIAFAGR…ATKLDSWFAE (175 aa). GTP-binding positions include 35-42, 62-66, 80-83, 147-150, and 180-182; these read GRSNAGKS, GRTQL, DLPG, TKAD, and YSA. Mg(2+)-binding residues include serine 42 and threonine 64.

It belongs to the TRAFAC class TrmE-Era-EngA-EngB-Septin-like GTPase superfamily. EngB GTPase family. It depends on Mg(2+) as a cofactor.

Its function is as follows. Necessary for normal cell division and for the maintenance of normal septation. The chain is Probable GTP-binding protein EngB from Glaesserella parasuis serovar 5 (strain SH0165) (Haemophilus parasuis).